The sequence spans 159 residues: Transcription elongation factor GreA (159 aa).

Positions 44-75 (SENAEYDAAREQQSQTEARIADLESKLSSATI) form a coiled coil.

Belongs to the GreA/GreB family.

Necessary for efficient RNA polymerase transcription elongation past template-encoded arresting sites. The arresting sites in DNA have the property of trapping a certain fraction of elongating RNA polymerases that pass through, resulting in locked ternary complexes. Cleavage of the nascent transcript by cleavage factors such as GreA or GreB allows the resumption of elongation from the new 3'terminus. GreA releases sequences of 2 to 3 nucleotides. This is Transcription elongation factor GreA from Chlorobium phaeovibrioides (strain DSM 265 / 1930) (Prosthecochloris vibrioformis (strain DSM 265)).